Here is a 428-residue protein sequence, read N- to C-terminus: Probable protein phosphatase 2C 5 (428 aa).

Residues 25-297 (RSEKVEKPFV…DDTTCVVVDI (273 aa)) form the PPM-type phosphatase domain. Mn(2+) contacts are provided by Asp73, Gly74, Asp249, and Asp288.

Belongs to the PP2C family. Requires Mg(2+) as cofactor. The cofactor is Mn(2+).

It catalyses the reaction O-phospho-L-seryl-[protein] + H2O = L-seryl-[protein] + phosphate. It carries out the reaction O-phospho-L-threonyl-[protein] + H2O = L-threonyl-[protein] + phosphate. The sequence is that of Probable protein phosphatase 2C 5 from Arabidopsis thaliana (Mouse-ear cress).